The chain runs to 262 residues: MHFFDTHTHLNYLQQFTGEPLSQLIDNAKQADVQKILVVAVKEADFKTIQNMTALFPDNLCYGLGLHPLYIQEHAENDLILLEQALKNRDTNCTAVAEIGLERAIPDLLTDELWAKQCHFFESQLYLAKQFNLPVNIHSRKTHDQIFTFLKRIPLSKLGVVHGFSGSYDQAKRFVDLGYKIGVGGTITYERANKTRQAIAKLPLDALVLETDSPDMPVFGFQGQPNRPERIVESFKALCTLRNEPAELIKKLTWENACQIFS.

The a divalent metal cation site is built by histidine 7, histidine 9, glutamate 98, histidine 138, histidine 162, and aspartate 212.

This sequence belongs to the metallo-dependent hydrolases superfamily. TatD-type hydrolase family. A divalent metal cation serves as cofactor.

This is an uncharacterized protein from Haemophilus influenzae (strain ATCC 51907 / DSM 11121 / KW20 / Rd).